We begin with the raw amino-acid sequence, 1440 residues long: Protein lin-15B (1440 aa).

4 disordered regions span residues 1–22 (MQTL…SSSS), 48–67 (ILRH…HLDA), 618–660 (PKEE…GRPI), and 738–769 (KDEP…PSSY). The segment covering 10–22 (TSNPASIPTSSSS) has biased composition (low complexity). Low complexity predominate over residues 631 to 646 (STSSPATSSPTIIRPR). The span at 757 to 767 (NRTTASSQGPS) shows a compositional bias: polar residues. The segment at 1135–1209 (NPGVCCFCSK…LLKGMIPDAA (75 aa)) adopts a THAP-type zinc-finger fold. 3 disordered regions span residues 1239-1281 (AIDL…EPSQ), 1298-1350 (RELS…GTSQ), and 1395-1440 (FADE…PSNE). Residues 1254-1264 (TQEEEEEEEYE) show a composition bias toward acidic residues. The segment at residues 1317 to 1329 (PNPRGRPRKYPKN) is a DNA-binding region (a.T hook 1). The segment covering 1396–1407 (ADEEEEEEEYEE) has biased composition (acidic residues). Residues 1418-1430 (GRPVGRPRKDANK) constitute a DNA-binding region (a.T hook 2).

In terms of biological role, synthetic multivulva (synMuv) class B protein. SynMuv proteins are required to repress the induction of vulval development. Acts redundantly with SynMuv class A protein lin-15A to negatively regulate vulval development. Regulates let-23 basal activity. The sequence is that of Protein lin-15B from Caenorhabditis elegans.